The primary structure comprises 623 residues: Quinoprotein ethanol dehydrogenase (623 aa).

An N-terminal signal peptide occupies residues 1–34; the sequence is MTIRSLPAALSPLSMAVQAVLLVSSLALAPAANA. Positions 45 and 51 each coordinate Ca(2+). Glutamate 95 is a pyrroloquinoline quinone binding site. Cysteine 139 and cysteine 140 are disulfide-bonded. Pyrroloquinoline quinone-binding positions include arginine 145, threonine 189, and 207–209; that span reads HGS. Glutamate 213 is a Ca(2+) binding site. A disordered region spans residues 242-279; that stretch reads GRLNGKDSTPTGDVKAPSWPDDPTTETGKVESWSHGGG. Positions 300 and 350 each coordinate Ca(2+). Aspartate 350 serves as the catalytic Proton acceptor. Residue arginine 378 participates in pyrroloquinoline quinone binding. The disordered stretch occupies residues 414 to 436; that stretch reads RPVENEGQRPAKPLPGETKGKPV. 2 WD repeats span residues 515–556 and 559–601; these read EHNE…ELWK and TGSG…LTKP. Positions 523 and 587 each coordinate pyrroloquinoline quinone.

It belongs to the bacterial PQQ dehydrogenase family. In terms of assembly, homodimer. Pyrroloquinoline quinone is required as a cofactor. The cofactor is Ca(2+).

The protein localises to the periplasm. The catalysed reaction is a primary alcohol + 2 Fe(III)-[cytochrome c] = an aldehyde + 2 Fe(II)-[cytochrome c] + 2 H(+). It carries out the reaction ethanol + 2 Fe(III)-[cytochrome c] = acetaldehyde + 2 Fe(II)-[cytochrome c] + 2 H(+). It catalyses the reaction ethanol + A = acetaldehyde + AH2. The enzyme catalyses 1-propanol + 2 Fe(III)-[cytochrome c] = propanal + 2 Fe(II)-[cytochrome c] + 2 H(+). Its pathway is alcohol metabolism; ethanol degradation; acetate from ethanol: step 1/2. With respect to regulation, enhanced by the presence of ethylamine or NH4(+) ions. Its function is as follows. Catalyzes the oxidation of ethanol and other primary alcohols to the corresponding aldehydes, except methanol, which is not a substrate. Uses a specific inducible cytochrome c550, encoded by the adjacent gene in the locus, as electron acceptor. Is a key enzyme of the carbon and energy metabolism during growth of P.putida on ethanol as the sole carbon and energy source. Displays lower activity on secondary alcohols, aldehydes and diols. Is not active with sugar alcohols such as glycerol and D-sorbitol. In vitro, reacts well with phenazine methosulfate (PMS) as an electron acceptor but not with NAD(P), potassium ferricyanide, or molecular oxygen. The sequence is that of Quinoprotein ethanol dehydrogenase from Pseudomonas putida (Arthrobacter siderocapsulatus).